Consider the following 144-residue polypeptide: Large ribosomal subunit protein uL13 (144 aa).

The protein belongs to the universal ribosomal protein uL13 family. As to quaternary structure, part of the 50S ribosomal subunit.

This protein is one of the early assembly proteins of the 50S ribosomal subunit, although it is not seen to bind rRNA by itself. It is important during the early stages of 50S assembly. The polypeptide is Large ribosomal subunit protein uL13 (Desulfovibrio desulfuricans (strain ATCC 27774 / DSM 6949 / MB)).